The sequence spans 124 residues: UPF0225 protein SCO1677 (124 aa).

This sequence belongs to the UPF0225 family.

This Streptomyces coelicolor (strain ATCC BAA-471 / A3(2) / M145) protein is UPF0225 protein SCO1677.